The primary structure comprises 169 residues: Large ribosomal subunit protein uL18 (169 aa).

Belongs to the universal ribosomal protein uL18 family. As to quaternary structure, part of the 50S ribosomal subunit. Contacts the 5S and 23S rRNAs.

Functionally, this is one of the proteins that bind and probably mediate the attachment of the 5S RNA into the large ribosomal subunit, where it forms part of the central protuberance. This Methanothrix thermoacetophila (strain DSM 6194 / JCM 14653 / NBRC 101360 / PT) (Methanosaeta thermophila) protein is Large ribosomal subunit protein uL18.